The chain runs to 565 residues: Adenine deaminase (565 aa).

It belongs to the metallo-dependent hydrolases superfamily. Adenine deaminase family. Mn(2+) serves as cofactor.

The enzyme catalyses adenine + H2O + H(+) = hypoxanthine + NH4(+). This Cereibacter sphaeroides (strain ATCC 17023 / DSM 158 / JCM 6121 / CCUG 31486 / LMG 2827 / NBRC 12203 / NCIMB 8253 / ATH 2.4.1.) (Rhodobacter sphaeroides) protein is Adenine deaminase.